The chain runs to 394 residues: MVRWLTAGESHGPALVATVEGLPAGIRMTSSDISAELARRRLGHGRGARMSFERDEVELLGGVRHGVTLGGPVSVVVRNTEWPKWERVMSPDPVDPAALAGLGRAAPLTRPRPGHADLAGMQKYGFDDARPVLERASARETAARVALGTAAKALLRQAYGIEVISHVVAIGAVEVPPGVPAPTSLAAVDADPVRCADQATSVRMVAEIDVAHADADTLGGIVEVLAYGCPPGLGSYVHGDRRIDARIAGELMGIQAIKGVEFGDGFTTARRRGSGAHDEIEPAGAGSRRVRRATDRAGGVEGGMTTGEPLRVRVAMKPISSLTRPLSTVDVSTGEAAVAINQRSDVCAVPAAGVVTEAMVALVLADAALEKFGGDSVEETRRNYEGYLKSLVIR.

NADP(+) is bound by residues arginine 40 and arginine 46. FMN contacts are provided by residues 135–137 and 255–256; these read RAS and QA. The disordered stretch occupies residues 270–291; the sequence is RRRGSGAHDEIEPAGAGSRRVR. FMN is bound by residues glycine 302, 317 to 321, and arginine 343; that span reads KPISS.

The protein belongs to the chorismate synthase family. As to quaternary structure, homotetramer. FMNH2 is required as a cofactor.

The catalysed reaction is 5-O-(1-carboxyvinyl)-3-phosphoshikimate = chorismate + phosphate. It participates in metabolic intermediate biosynthesis; chorismate biosynthesis; chorismate from D-erythrose 4-phosphate and phosphoenolpyruvate: step 7/7. Catalyzes the anti-1,4-elimination of the C-3 phosphate and the C-6 proR hydrogen from 5-enolpyruvylshikimate-3-phosphate (EPSP) to yield chorismate, which is the branch point compound that serves as the starting substrate for the three terminal pathways of aromatic amino acid biosynthesis. This reaction introduces a second double bond into the aromatic ring system. The polypeptide is Chorismate synthase (Frankia casuarinae (strain DSM 45818 / CECT 9043 / HFP020203 / CcI3)).